The following is a 243-amino-acid chain: Glucosamine-6-phosphate deaminase (243 aa).

Aspartate 67 serves as the catalytic Proton acceptor; for enolization step. Catalysis depends on asparagine 137, which acts as the For ring-opening step. The active-site Proton acceptor; for ring-opening step is the histidine 139. The active-site For ring-opening step is the glutamate 144.

The protein belongs to the glucosamine/galactosamine-6-phosphate isomerase family. NagB subfamily.

The catalysed reaction is alpha-D-glucosamine 6-phosphate + H2O = beta-D-fructose 6-phosphate + NH4(+). The protein operates within amino-sugar metabolism; N-acetylneuraminate degradation; D-fructose 6-phosphate from N-acetylneuraminate: step 5/5. Its function is as follows. Catalyzes the reversible isomerization-deamination of glucosamine 6-phosphate (GlcN6P) to form fructose 6-phosphate (Fru6P) and ammonium ion. The protein is Glucosamine-6-phosphate deaminase of Staphylococcus epidermidis (strain ATCC 12228 / FDA PCI 1200).